A 262-amino-acid chain; its full sequence is Trypsin eta (262 aa).

The first 22 residues, 1–22, serve as a signal peptide directing secretion; it reads MNKVILRILAVLFLLGIYAVSA. The propeptide at 23–27 is activation peptide; sequence QSDGR. The Peptidase S1 domain maps to 28-259; it reads IVGGADTSSY…YKDWIAKQRT (232 aa). Cysteines 59 and 75 form a disulfide. Residues His74 and Asp120 each act as charge relay system in the active site. 2 disulfide bridges follow: Cys185/Cys200 and Cys211/Cys235. Ser215 acts as the Charge relay system in catalysis.

Belongs to the peptidase S1 family.

It localises to the secreted. Its subcellular location is the extracellular space. The enzyme catalyses Preferential cleavage: Arg-|-Xaa, Lys-|-Xaa.. This is Trypsin eta (etaTry) from Drosophila melanogaster (Fruit fly).